The sequence spans 412 residues: Argininosuccinate synthase (412 aa).

ATP-binding positions include 12 to 20 (AYSGGLDTS) and A39. Positions 91 and 96 each coordinate L-citrulline. G121 provides a ligand contact to ATP. Residues T123, N127, and D128 each contribute to the L-aspartate site. N127 contributes to the L-citrulline binding site. Residues R131, S180, S189, E265, and Y277 each coordinate L-citrulline.

This sequence belongs to the argininosuccinate synthase family. Type 1 subfamily. In terms of assembly, homotetramer.

It is found in the cytoplasm. It catalyses the reaction L-citrulline + L-aspartate + ATP = 2-(N(omega)-L-arginino)succinate + AMP + diphosphate + H(+). Its pathway is amino-acid biosynthesis; L-arginine biosynthesis; L-arginine from L-ornithine and carbamoyl phosphate: step 2/3. In Pseudoalteromonas atlantica (strain T6c / ATCC BAA-1087), this protein is Argininosuccinate synthase.